Here is a 183-residue protein sequence, read N- to C-terminus: Putative 3-methyladenine DNA glycosylase (183 aa).

The protein belongs to the DNA glycosylase MPG family.

This chain is Putative 3-methyladenine DNA glycosylase, found in Rickettsia africae (strain ESF-5).